The following is a 137-amino-acid chain: 1,4-dihydroxy-2-naphthoyl-CoA hydrolase (137 aa).

Aspartate 13 is a catalytic residue.

The protein belongs to the 4-hydroxybenzoyl-CoA thioesterase family. DHNA-CoA hydrolase subfamily.

The enzyme catalyses 1,4-dihydroxy-2-naphthoyl-CoA + H2O = 1,4-dihydroxy-2-naphthoate + CoA + H(+). Its pathway is cofactor biosynthesis; phylloquinone biosynthesis. The protein operates within quinol/quinone metabolism; 1,4-dihydroxy-2-naphthoate biosynthesis; 1,4-dihydroxy-2-naphthoate from chorismate: step 7/7. In terms of biological role, catalyzes the hydrolysis of 1,4-dihydroxy-2-naphthoyl-CoA (DHNA-CoA) to 1,4-dihydroxy-2-naphthoate (DHNA), a reaction involved in phylloquinone (vitamin K1) biosynthesis. This chain is 1,4-dihydroxy-2-naphthoyl-CoA hydrolase, found in Crocosphaera subtropica (strain ATCC 51142 / BH68) (Cyanothece sp. (strain ATCC 51142)).